The primary structure comprises 130 residues: Small ribosomal subunit protein uS11c (130 aa).

It belongs to the universal ribosomal protein uS11 family. Part of the 30S ribosomal subunit.

The protein localises to the plastid. The protein resides in the chloroplast. The protein is Small ribosomal subunit protein uS11c of Chaetosphaeridium globosum (Charophycean green alga).